Consider the following 219-residue polypeptide: 2,3-bisphosphoglycerate-dependent phosphoglycerate mutase 2 (219 aa).

Substrate is bound by residues 8-15, 21-22, R58, 85-88, K96, 112-113, and 156-157; these read RHGQSIWN, TG, ERHY, RR, and GN. Catalysis depends on H9, which acts as the Tele-phosphohistidine intermediate. The Proton donor/acceptor role is filled by E85.

The protein belongs to the phosphoglycerate mutase family. BPG-dependent PGAM subfamily.

It carries out the reaction (2R)-2-phosphoglycerate = (2R)-3-phosphoglycerate. It functions in the pathway carbohydrate degradation; glycolysis; pyruvate from D-glyceraldehyde 3-phosphate: step 3/5. Catalyzes the interconversion of 2-phosphoglycerate and 3-phosphoglycerate. This is 2,3-bisphosphoglycerate-dependent phosphoglycerate mutase 2 from Gloeobacter violaceus (strain ATCC 29082 / PCC 7421).